A 397-amino-acid chain; its full sequence is Protein-glutamate methylesterase/protein-glutamine glutaminase of group 2 operon (397 aa).

One can recognise a Response regulatory domain in the interval 21 to 139; that stretch reads RVMIVDDSVV…EASAADTFHH (119 aa). Asp72 carries the post-translational modification 4-aspartylphosphate. Residues 199-388 enclose the CheB-type methylesterase domain; it reads PFSTLAPKVL…LPLNQIGAKV (190 aa). Active-site residues include Ser213, His241, and Asp337.

Belongs to the CheB family. Post-translationally, phosphorylated by CheA. Phosphorylation of the N-terminal regulatory domain activates the methylesterase activity.

The protein localises to the cytoplasm. It catalyses the reaction [protein]-L-glutamate 5-O-methyl ester + H2O = L-glutamyl-[protein] + methanol + H(+). The enzyme catalyses L-glutaminyl-[protein] + H2O = L-glutamyl-[protein] + NH4(+). Functionally, involved in chemotaxis. Part of a chemotaxis signal transduction system that modulates chemotaxis in response to various stimuli. Catalyzes the demethylation of specific methylglutamate residues introduced into the chemoreceptors (methyl-accepting chemotaxis proteins or MCP) by CheR. Also mediates the irreversible deamidation of specific glutamine residues to glutamic acid. This is Protein-glutamate methylesterase/protein-glutamine glutaminase of group 2 operon from Bradyrhizobium diazoefficiens (strain JCM 10833 / BCRC 13528 / IAM 13628 / NBRC 14792 / USDA 110).